The primary structure comprises 153 residues: Large ribosomal subunit protein uL15 (153 aa).

Residues arginine 21 to serine 42 are disordered. Over residues isoleucine 23–isoleucine 35 the composition is skewed to gly residues.

It belongs to the universal ribosomal protein uL15 family. Part of the 50S ribosomal subunit.

Functionally, binds to the 23S rRNA. In Rickettsia peacockii (strain Rustic), this protein is Large ribosomal subunit protein uL15.